Consider the following 2453-residue polypeptide: Nuclear receptor corepressor 1 (2453 aa).

Residues M1–F29 are compositionally biased toward polar residues. Disordered regions lie at residues M1–D116, P147–S177, and Q206–K231. An interaction with ZBTB33 and HEXIM1 region spans residues M1–I373. Over residues S51–Q64 the composition is skewed to low complexity. 2 stretches are compositionally biased toward basic and acidic residues: residues P77–G88 and V99–D116. A Phosphoserine modification is found at S172. A coiled-coil region spans residues S174 to P216. The segment covering E212–K221 has biased composition (basic and acidic residues). Position 224 is a phosphoserine (S224). An interaction with SIN3A/B region spans residues F254–D312. Positions A299–N328 form a coiled coil. An SANT 1 domain is found at Q435–N486. 2 disordered regions span residues K497–E631 and L677–Q908. Positions R501–E550 form a coiled coil. Composition is skewed to basic and acidic residues over residues S509–E531 and K541–A556. Positions E592–E604 are enriched in low complexity. The segment covering E605–P616 has biased composition (pro residues). The 52-residue stretch at V622 to N673 folds into the SANT 2 domain. Residues Q697–A707 show a composition bias toward polar residues. Over residues Q708–G727 the composition is skewed to acidic residues. Over residues T771–T787 the composition is skewed to low complexity. The span at G851–P885 shows a compositional bias: basic and acidic residues. Residue S1011 is modified to Phosphoserine. The segment at V1034–S1058 is disordered. K1117 participates in a covalent cross-link: Glycyl lysine isopeptide (Lys-Gly) (interchain with G-Cter in SUMO1); alternate. A Glycyl lysine isopeptide (Lys-Gly) (interchain with G-Cter in SUMO2); alternate cross-link involves residue K1117. Residue S1122 is modified to Phosphoserine. A Glycyl lysine isopeptide (Lys-Gly) (interchain with G-Cter in SUMO2) cross-link involves residue K1195. Residues S1206, S1207, S1274, S1292, and S1333 each carry the phosphoserine modification. An N6-acetyllysine modification is found at K1347. T1378 is subject to Phosphothreonine. K1400 participates in a covalent cross-link: Glycyl lysine isopeptide (Lys-Gly) (interchain with G-Cter in SUMO2). K1423 is covalently cross-linked (Glycyl lysine isopeptide (Lys-Gly) (interchain with G-Cter in SUMO2); alternate). The residue at position 1423 (K1423) is an N6-acetyllysine; alternate. The segment at G1450–G1544 is disordered. Phosphoserine occurs at positions 1459 and 1481. Over residues S1459 to R1469 the composition is skewed to polar residues. The segment covering V1495–V1514 has biased composition (polar residues). The interval R1510–D2453 is interaction with C1D. Residue K1525 forms a Glycyl lysine isopeptide (Lys-Gly) (interchain with G-Cter in SUMO2) linkage. S1598 carries the phosphoserine modification. Disordered regions lie at residues R1697–Q1780 and A1902–G1939. Basic and acidic residues-rich tracts occupy residues A1718 to I1745 and A1919 to T1937. Residues I1949–I1953 carry the CORNR box 1 motif. The tract at residues S1959 to V2060 is disordered. Low complexity predominate over residues S1968 to S1979. Residues S1993 and S1997 each carry the phosphoserine modification. The tract at residues P2050 to P2129 is ID1. A required for interaction with RARA in the absence of its ligand region spans residues R2065–T2068. The CORNR box 2 signature appears at I2073–I2077. Over residues S2088 to V2124 the composition is skewed to polar residues. A disordered region spans residues S2088 to E2174. Phosphoserine occurs at positions 2116, 2134, 2150, 2165, and 2198. The span at L2138–I2156 shows a compositional bias: basic and acidic residues. The segment at I2226–G2287 is ID2. The CORNR box 3 signature appears at L2277–I2281. Residues P2303–F2396 form a disordered region. Low complexity predominate over residues S2310–S2319. T2412 carries the post-translational modification Phosphothreonine. A phosphoserine mark is found at S2449 and S2451.

This sequence belongs to the N-CoR nuclear receptor corepressors family. Forms a large corepressor complex that contains SIN3A/B and histone deacetylases HDAC1 and HDAC2. This complex associates with the thyroid receptor (TR) and the retinoid acid receptor (RAR) in the absence of ligand. Interacts directly with RARA; the interaction is facilitated with RARA trimethylation. Component of the N-Cor repressor complex, at least composed of CBFA2T3, HEXIM1, NCOR1, NCOR2, HDAC3, TBL1X, TBL1XR1, CORO2A and GPS2. Interacts with ZBTB33; the interaction serves to recruit the N-CoR complex to promoter regions containing methylated CpG dinucleotides. Interacts with TRIM28 and KDM3A. Interacts (via the RD1 domain) with BAZ1A (via its N-terminal); the interaction corepresses a number of NCOR1-regulated genes. Interacts with BCL6, C1D, DACH1, HEXIM1, HDAC7, RORA, RORC, SAP30, SIAH2, SIN3A and SIN3B. May interact with DEAF1. Interacts with RXRA. Interacts with SETD5. Interacts with VDR. Interacts with ZBTB7A. Interacts with AR. Interacts with HDAC3. Ubiquitinated; mediated by SIAH2 and leading to its subsequent proteasomal degradation. As to expression, ubiquitous.

Its subcellular location is the nucleus. Functionally, mediates transcriptional repression by certain nuclear receptors. Part of a complex which promotes histone deacetylation and the formation of repressive chromatin structures which may impede the access of basal transcription factors. Participates in the transcriptional repressor activity produced by BCL6. Recruited by ZBTB7A to the androgen response elements/ARE on target genes, negatively regulates androgen receptor signaling and androgen-induced cell proliferation. Mediates the NR1D1-dependent repression and circadian regulation of TSHB expression. The NCOR1-HDAC3 complex regulates the circadian expression of the core clock gene ARTNL/BMAL1 and the genes involved in lipid metabolism in the liver. The protein is Nuclear receptor corepressor 1 (Ncor1) of Mus musculus (Mouse).